Here is a 501-residue protein sequence, read N- to C-terminus: Ribose import ATP-binding protein RbsA (501 aa).

2 ABC transporter domains span residues 5–241 and 252–495; these read LQLK…VGRK and APGE…VGKL. 37-44 is a binding site for ATP; sequence GENGAGKS.

The protein belongs to the ABC transporter superfamily. Ribose importer (TC 3.A.1.2.1) family. The complex is composed of an ATP-binding protein (RbsA), two transmembrane proteins (RbsC) and a solute-binding protein (RbsB).

It localises to the cell inner membrane. The catalysed reaction is D-ribose(out) + ATP + H2O = D-ribose(in) + ADP + phosphate + H(+). Part of the ABC transporter complex RbsABC involved in ribose import. Responsible for energy coupling to the transport system. The protein is Ribose import ATP-binding protein RbsA of Salmonella paratyphi A (strain ATCC 9150 / SARB42).